A 672-amino-acid polypeptide reads, in one-letter code: 2,4-dienoyl-CoA reductase [(2E)-enoyl-CoA-producing] (672 aa).

FMN-binding positions include 25–27 (SMH), Gly59, and Gln101. The active-site Proton donor is the Tyr167. Arg176 contributes to the substrate binding site. Residue Arg215 coordinates FMN. 253-256 (HEAR) lines the substrate pocket. Residues Arg289 and 311–312 (AR) each bind FMN. Positions 335 and 338 each coordinate [4Fe-4S] cluster. Position 340 (Gln340) interacts with FAD. NADP(+) is bound at residue Gln340. 2 residues coordinate [4Fe-4S] cluster: Cys342 and Cys354. FAD contacts are provided by Ala385, Asp404, Gln412, Lys422, and Val449. 563 to 564 (RK) provides a ligand contact to NADP(+). Substrate-binding residues include Lys567 and Trp578. FAD is bound by residues Gly649 and 656–658 (LDA). 654 to 656 (MEL) serves as a coordination point for NADP(+).

This sequence in the N-terminal section; belongs to the NADH:flavin oxidoreductase/NADH oxidase family. In terms of assembly, monomer. FMN is required as a cofactor. It depends on FAD as a cofactor. Requires [4Fe-4S] cluster as cofactor.

The enzyme catalyses a 4,5-saturated-(2E)-enoyl-CoA + NADP(+) = a (2E,4E)-dienoyl-CoA + NADPH + H(+). The catalysed reaction is a (2E,4Z)-dienoyl-CoA + NADPH + H(+) = a 4,5-saturated-(2E)-enoyl-CoA + NADP(+). It catalyses the reaction (2E)-decenoyl-CoA + NADP(+) = (2E,4E)-decadienoyl-CoA + NADPH + H(+). It carries out the reaction (2E)-decenoyl-CoA + NADP(+) = (2E,4Z)-decadienoyl-CoA + NADPH + H(+). The protein operates within lipid metabolism; fatty acid beta-oxidation. Its activity is regulated as follows. Is non-competitively inhibited by NADH. Functionally, functions as an auxiliary enzyme in the beta-oxidation of unsaturated fatty acids with double bonds at even carbon positions. Catalyzes the NADPH-dependent reduction of the C4-C5 double bond of the acyl chain of 2,4-dienoyl-CoA to yield 2-trans-enoyl-CoA. Acts on both isomers, 2-trans,4-cis- and 2-trans,4-trans-decadienoyl-CoA, with almost equal efficiency. Is not active with NADH instead of NADPH. Does not show cis-&gt;trans isomerase activity. This is 2,4-dienoyl-CoA reductase [(2E)-enoyl-CoA-producing] from Escherichia coli (strain K12).